The following is a 151-amino-acid chain: Ubiquitin-conjugating enzyme E2 2 (151 aa).

Positions 1 to 26 (MSTSARRRLMRDFKRMQTDPPAGVSA) are disordered. A UBC core domain is found at 4–150 (SARRRLMRDF…VRETVEKSWE (147 aa)). Cys88 functions as the Glycyl thioester intermediate in the catalytic mechanism.

The protein belongs to the ubiquitin-conjugating enzyme family.

It localises to the cytoplasm. Its subcellular location is the nucleus. The catalysed reaction is S-ubiquitinyl-[E1 ubiquitin-activating enzyme]-L-cysteine + [E2 ubiquitin-conjugating enzyme]-L-cysteine = [E1 ubiquitin-activating enzyme]-L-cysteine + S-ubiquitinyl-[E2 ubiquitin-conjugating enzyme]-L-cysteine.. The protein operates within protein modification; protein ubiquitination. Functionally, catalyzes the covalent attachment of ubiquitin to other proteins. Plays a role in transcription regulation by catalyzing the monoubiquitination of histone H2B to form H2BK123ub1. H2BK123ub1 gives a specific tag for epigenetic transcriptional activation and is also a prerequisite for H3K4me and H3K79me formation. Also involved in postreplication repair of UV-damaged DNA, in N-end rule-dependent protein degradation and in sporulation. The polypeptide is Ubiquitin-conjugating enzyme E2 2 (ubc2) (Aspergillus fumigatus (strain ATCC MYA-4609 / CBS 101355 / FGSC A1100 / Af293) (Neosartorya fumigata)).